An 852-amino-acid chain; its full sequence is MPHIQESRVWCRSISQLSHLAEQFVTENGTESTDMKLLLQQCVDTLSNYQDECKKIKSVSKPVPSKELYDLYETAYVYFKIVSLIVLNKIPKLEEYARAKSDAVDRTGKQLLEIYNMLVNRLVKDDRIAEIKRFVKENSRRDPEAKNEQIGVESGKSIPATLLRNLLMGPSASGTVLLVDVRPRLDFMRCHIKSSSIICIEPVSFKESYTDIDLGKKSMITSPDAEIALFQDRDKFDYIVVYTQDSEKNKHNVQQQQLLVDLLINRSFEKALDRTKVFILAGGFSEWSNAHPDFCVSSQGDSVYLNGDTSGLSLQLMPQTTPQKQYNNMFQTMLSGPTDVHGIIRNPHNFPTQQKSKLKRVPSFRDYFRSSSSSSNINERPGSVPPQLSNGSTIYPETPKLMTNDEYMKSLPQLSPITARAITSPSRALSAVGVSKSSASNSISSLLANSGSASPMKPPDTPLPFTDSIKTLGQQNLTVAVSNLNFSVGLVNCGNSCYMSCIIQCLLGTQELCTMFLNNSYQNHINLNSRLGSKGLLARYFSQLIHQMYQYGKDIRKKMGNEKTAVIPTQFKIACGSINSSFKDNTQQDCQEFCQFLLDGLHEDLNQCGNNPPLKELSEEAEKMREMMPMRLASAIEWERYLTTDFSVIVDLFQGQYASQLQCKVCQRTSTTYQPFSVLSVPVPSTRTCTLTDCFTEFTKIETLEQEEQWSCPSCKKRQPSTKKITITRLPRNLIIHLKRFDNMLNKNNVFVSYPSVLDLTAFWANDYDKKVTNNNVELPSRGQVPPFNYQLYGIACHDGTLRAGHYTAYVNKGAVLGWCYYDDTNWRQIRSAREYITQNAYVLFYHRIHST.

The region spanning 172 to 296 (ASGTVLLVDV…WSNAHPDFCV (125 aa)) is the Rhodanese domain. The disordered stretch occupies residues 369–393 (RSSSSSSNINERPGSVPPQLSNGST). The USP domain occupies 488 to 849 (VGLVNCGNSC…NAYVLFYHRI (362 aa)). Catalysis depends on Cys497, which acts as the Nucleophile. The active-site Proton acceptor is the His806.

The protein belongs to the peptidase C19 family.

It is found in the cytoplasm. It localises to the late endosome membrane. The catalysed reaction is Thiol-dependent hydrolysis of ester, thioester, amide, peptide and isopeptide bonds formed by the C-terminal Gly of ubiquitin (a 76-residue protein attached to proteins as an intracellular targeting signal).. RFU1 is an inhibitor of deubiquitination activity. Functionally, ubiquitin thioesterase that acts at the late endosome/prevacuolar compartment to recover ubiquitin from ubiquitinated membrane proteins en route to the vacuole. Also removes ubiquitin from soluble proteins targeted to proteasomes. Is essential to maintain a normal level of free ubiquitin. Required for promoting coordination of DNA replication and avoids DNA overreplication. The chain is Ubiquitin carboxyl-terminal hydrolase 4 (DOA4) from Eremothecium gossypii (strain ATCC 10895 / CBS 109.51 / FGSC 9923 / NRRL Y-1056) (Yeast).